The primary structure comprises 183 residues: MDFSDDNLIWLDLEMTGLDPERDRIIEIATIVTNSHLDILAEGPAFAIHQPDKLLTAMDNWNTSHHTASGLLERVKNSSVDEVEAETLTLAFLEKYVSAGKSPLCGNSVCQDRRFLSRYMPRLNQFFHYRHLDVTTLKILAQRWAPQIAAAHIKESQHLALQDIRDSIEELRYYRAHLLNLSK.

Residues 8-171 enclose the Exonuclease domain; the sequence is LIWLDLEMTG…QDIRDSIEEL (164 aa). Residue Tyr129 is part of the active site.

It belongs to the oligoribonuclease family.

Its subcellular location is the cytoplasm. In terms of biological role, 3'-to-5' exoribonuclease specific for small oligoribonucleotides. This chain is Oligoribonuclease, found in Coxiella burnetii (strain RSA 493 / Nine Mile phase I).